The sequence spans 756 residues: MASAPPASPPGSEPPGPDPEPGGPDGPGAAQLAPGPAELRLGAPVGGPDPQSPGLDEPAPGAAADGGARWSAGPAPGLEGGPRDPGPSAPPPRSGPRGQLASPDAPGPGPRSEAPLPELDPLFSWTEEPEECGPASCPESAPFRLQGSSSSHRARGEVDVFSPFPAPTAGELALEQGPGSPPQPSDLSQTHPLPSEPVGSQEDGPRLRAVFDALDGDGDGFVRIEDFIQFATVYGAEQVKDLTKYLDPSGLGVISFEDFYQGITAIRNGDPDGQCYGGVASAQDEEPLACPDEFDDFVTYEANEVTDSAYMGSESTYSECETFTDEDTSTLVHPELQPEGDADSAGGSAVPSECLDAMEEPDHGALLLLPGRPHPHGQSVITVIGGEEHFEDYGEGSEAELSPETLCNGQLGCSDPAFLTPSPTKRLSSKKVARYLHQSGALTMEALEDPSPELMEGPEEDIADKVVFLERRVLELEKDTAATGEQHSRLRQENLQLVHRANALEEQLKEQELRACEMVLEETRRQKELLCKMEREKSIEIENLQTRLQQLDEENSELRSCTPCLKANIERLEEEKQKLLDEIESLTLRLSEEQENKRRMGDRLSHERHQFQRDKEATQELIEDLRKQLEHLQLLKLEAEQRRGRSSSMGLQEYHSRARESELEQEVRRLKQDNRNLKEQNEELNGQIITLSIQGAKSLFSTAFSESLAAEISSVSRDELMEAIQKQEEINFRLQDYIDRIIVAIMETNPSILEVK.

Residues 1–24 (MASAPPASPPGSEPPGPDPEPGGP) are compositionally biased toward pro residues. The disordered stretch occupies residues 1 to 204 (MASAPPASPP…SEPVGSQEDG (204 aa)). The interval 2–435 (ASAPPASPPG…RLSSKKVARY (434 aa)) is important for binding to DYNC1LI1. Low complexity predominate over residues 27–39 (PGAAQLAPGPAEL). A Phosphoserine modification is found at Ser-52. Positions 53–68 (PGLDEPAPGAAADGGA) are enriched in low complexity. The span at 84-94 (DPGPSAPPPRS) shows a compositional bias: pro residues. Position 102 is a phosphoserine; by CDK1 (Ser-102). EF-hand domains follow at residues 202–237 (EDGP…YGAE) and 234–269 (YGAE…IRNG). Positions 215, 217, 219, 226, 247, 249, and 258 each coordinate Ca(2+). Residues Ser-281, Ser-348, Ser-488, Ser-538, Ser-647, and Ser-648 each carry the phosphoserine modification. Positions 484–588 (GEQHSRLRQE…LLDEIESLTL (105 aa)) are ARF-binding domain (ABD). Residues 485–694 (EQHSRLRQEN…NGQIITLSIQ (210 aa)) adopt a coiled-coil conformation. The disordered stretch occupies residues 645–664 (RSSSMGLQEYHSRARESELE). Positions 654 to 664 (YHSRARESELE) are enriched in basic and acidic residues. The region spanning 694 to 756 (QGAKSLFSTA…ETNPSILEVK (63 aa)) is the FIP-RBD domain.

Homodimer. Interacts with RAB11A; the interaction is direct and is required for the recruitment to endosomes. Interacts with RAB11B. Forms a ternary complex with RAB11A and dynein intermediate chain DYNC1LI1; RAB11FIP3 links RAB11A to dynein and the interaction regulates endocytic trafficking. Interacts with dynein intermediate chain and dynactin (DCTN1); the interaction activates dynein processivity. Interacts with ARF6 and EXOC7; the interaction serves for recruitment and tethering of recycling endosomes-derived vesicles to the cleavage furrow/midbody. Interacts with RACGAP1/MgcRacGAP; the interaction occurs at late telophase and is required for recruitment and tethering of recycling endosomes-derived vesicles to the cleavage furrow/midbody. Forms a complex with RAB11A and Rabin8/RAB3IP, probably a heterohexamer with two of each protein subunit, where RAB3IP and RAB11FIP3 simultaneously bind to RAB11A; the complex promotes preciliary trafficking. Forms a complex containing RAB11A, ASAP1, RAB3IP, RAP11FIP3 and ARF4; the complex promotes preciliary trafficking; the complex binds to RHO in photoreceptor cells and promotes RHO ciliary transport. Interacts with RAB11FIP4. Interacts with RAB25. Phosphorylated at Ser-102 by CDK1 during metaphase, and dephosphorylated as cells enter telophase.

It localises to the endosome membrane. Its subcellular location is the recycling endosome membrane. The protein localises to the cytoplasm. The protein resides in the cytoskeleton. It is found in the microtubule organizing center. It localises to the centrosome. Its subcellular location is the cleavage furrow. The protein localises to the midbody. The protein resides in the golgi apparatus membrane. It is found in the golgi apparatus. It localises to the trans-Golgi network membrane. In terms of biological role, downstream effector molecule for Rab11 GTPase which is involved in endocytic trafficking, cytokinesis and intracellular ciliogenesis by participating in membrane delivery. Recruited by Rab11 to endosomes where it links Rab11 to dynein motor complex. The functional Rab11-RAB11FIP3-dynein complex regulates the movement of peripheral sorting endosomes (SE) along microtubule tracks toward the microtubule organizing center/centrosome, generating the endocytic recycling compartment (ERC) during interphase of cell cycle. Facilitates the interaction between dynein and dynactin and activates dynein processivity. Binding with ASAP1 is needed to regulate the pericentrosomal localization of recycling endosomes. The Rab11-RAB11FIP3 complex is also implicated in the transport during telophase of vesicles derived from recycling endosomes to the cleavage furrow via centrosome-anchored microtubules, where the vesicles function to deliver membrane during late cytokinesis and abscission. The recruitment of Rab11-RAB11FIP3-containing endosomes to the cleavage furrow and tethering to the midbody is co-mediated by RAB11FIP3 interaction with ARF6-exocyst and RACGAP1-MKLP1 tethering complexes. Also involved in the Rab11-Rabin8-Rab8 ciliogenesis cascade by facilitating the orderly assembly of a ciliary targeting complex containing Rab11, ASAP1, Rabin8/RAB3IP, RAB11FIP3 and ARF4, which directs preciliary vesicle trafficking to mother centriole and ciliogenesis initiation. Also promotes the activity of Rab11 and ASAP1 in the ARF4-dependent Golgi-to-cilia transport of the sensory receptor rhodopsin. Competes with WDR44 for binding to Rab11, which controls intracellular ciliogenesis pathway. May play a role in breast cancer cell motility by regulating actin cytoskeleton. The protein is Rab11 family-interacting protein 3 of Homo sapiens (Human).